We begin with the raw amino-acid sequence, 117 residues long: MDWTWRILFLVAAATGAHSQVQLVQSGSELKKPGASVKVSCKASGYTFTSYAMNWVRQAPGQGLEWMGWINTNTGNPTYAQGFTGRFVFSLDTSVSTAYLQICSLKAEDTAVYYCAR.

The N-terminal stretch at 1–19 is a signal peptide; sequence MDWTWRILFLVAAATGAHS. The interval 20–44 is framework-1; the sequence is QVQLVQSGSELKKPGASVKVSCKAS. Positions 20–117 constitute an Ig-like domain; it reads QVQLVQSGSE…EDTAVYYCAR (98 aa). Cys41 and Cys115 are oxidised to a cystine. Residues 45–52 form a complementarity-determining-1 region; the sequence is GYTFTSYA. Residues 53-69 are framework-2; that stretch reads MNWVRQAPGQGLEWMGW. Positions 70–77 are complementarity-determining-2; it reads INTNTGNP. The segment at 78–115 is framework-3; it reads TYAQGFTGRFVFSLDTSVSTAYLQICSLKAEDTAVYYC. The complementarity-determining-3 stretch occupies residues 116 to 117; the sequence is AR.

In terms of assembly, immunoglobulins are composed of two identical heavy chains and two identical light chains; disulfide-linked.

Its subcellular location is the secreted. It localises to the cell membrane. Functionally, v region of the variable domain of immunoglobulin heavy chains that participates in the antigen recognition. Immunoglobulins, also known as antibodies, are membrane-bound or secreted glycoproteins produced by B lymphocytes. In the recognition phase of humoral immunity, the membrane-bound immunoglobulins serve as receptors which, upon binding of a specific antigen, trigger the clonal expansion and differentiation of B lymphocytes into immunoglobulins-secreting plasma cells. Secreted immunoglobulins mediate the effector phase of humoral immunity, which results in the elimination of bound antigens. The antigen binding site is formed by the variable domain of one heavy chain, together with that of its associated light chain. Thus, each immunoglobulin has two antigen binding sites with remarkable affinity for a particular antigen. The variable domains are assembled by a process called V-(D)-J rearrangement and can then be subjected to somatic hypermutations which, after exposure to antigen and selection, allow affinity maturation for a particular antigen. The polypeptide is Immunoglobulin heavy variable 7-4-1 (Homo sapiens (Human)).